The sequence spans 599 residues: Elongation factor 4 (599 aa).

Residues 2 to 184 (KNIRNFSIIA…RLVRDIPPPQ (183 aa)) enclose the tr-type G domain. Residues 14 to 19 (DHGKST) and 131 to 134 (NKID) contribute to the GTP site.

Belongs to the TRAFAC class translation factor GTPase superfamily. Classic translation factor GTPase family. LepA subfamily.

It is found in the cell inner membrane. It catalyses the reaction GTP + H2O = GDP + phosphate + H(+). Required for accurate and efficient protein synthesis under certain stress conditions. May act as a fidelity factor of the translation reaction, by catalyzing a one-codon backward translocation of tRNAs on improperly translocated ribosomes. Back-translocation proceeds from a post-translocation (POST) complex to a pre-translocation (PRE) complex, thus giving elongation factor G a second chance to translocate the tRNAs correctly. Binds to ribosomes in a GTP-dependent manner. This Salmonella arizonae (strain ATCC BAA-731 / CDC346-86 / RSK2980) protein is Elongation factor 4.